Consider the following 307-residue polypeptide: Fe-S cluster assembly protein dre2 (307 aa).

2 disordered regions span residues 1 to 26 (MTPV…PSTS) and 159 to 179 (KKKK…VGFV). The segment covering 15–26 (AAPPTKTAPSTS) has biased composition (low complexity). The N-terminal SAM-like domain stretch occupies residues 23–152 (PSTSTRTLLL…EKPAYQEAAV (130 aa)). Positions 153-197 (PLRLGGKKKKAPAPTEQPPVATGVGFVDGNDELIDEDDLLSDDDL) are linker. Positions 207, 219, 222, and 224 each coordinate [2Fe-2S] cluster. Positions 207-224 (CQPEKAKKRRRPCKDCTC) are fe-S binding site A. [4Fe-4S] cluster-binding residues include C270, C273, C281, and C284. 2 consecutive short sequence motifs (cx2C motif) follow at residues 270 to 273 (CNSC) and 281 to 284 (CSSC). The tract at residues 270 to 284 (CNSCSLGDAFRCSSC) is fe-S binding site B.

This sequence belongs to the anamorsin family. In terms of assembly, monomer. Interacts with tah18. Interacts with mia40. Requires [2Fe-2S] cluster as cofactor. [4Fe-4S] cluster serves as cofactor.

Its subcellular location is the cytoplasm. It is found in the mitochondrion intermembrane space. In terms of biological role, component of the cytosolic iron-sulfur (Fe-S) protein assembly (CIA) machinery required for the maturation of extramitochondrial Fe-S proteins. Part of an electron transfer chain functioning in an early step of cytosolic Fe-S biogenesis, facilitating the de novo assembly of a [4Fe-4S] cluster on the scaffold complex cfd1-nbp35. Electrons are transferred to dre2 from NADPH via the FAD- and FMN-containing protein tah18. Tah18-dre2 are also required for the assembly of the diferric tyrosyl radical cofactor of ribonucleotide reductase (RNR), probably by providing electrons for reduction during radical cofactor maturation in the catalytic small subunit rnr2. In Aspergillus terreus (strain NIH 2624 / FGSC A1156), this protein is Fe-S cluster assembly protein dre2.